Reading from the N-terminus, the 362-residue chain is Phospho-2-dehydro-3-deoxyheptonate aldolase (362 aa).

It belongs to the class-I DAHP synthase family.

It carries out the reaction D-erythrose 4-phosphate + phosphoenolpyruvate + H2O = 7-phospho-2-dehydro-3-deoxy-D-arabino-heptonate + phosphate. The protein operates within metabolic intermediate biosynthesis; chorismate biosynthesis; chorismate from D-erythrose 4-phosphate and phosphoenolpyruvate: step 1/7. Stereospecific condensation of phosphoenolpyruvate (PEP) and D-erythrose-4-phosphate (E4P) giving rise to 3-deoxy-D-arabino-heptulosonate-7-phosphate (DAHP). The chain is Phospho-2-dehydro-3-deoxyheptonate aldolase (aroG) from Haemophilus influenzae (strain ATCC 51907 / DSM 11121 / KW20 / Rd).